The sequence spans 108 residues: PTS system fructose-like EIIB component 1 (108 aa).

One can recognise a PTS EIIB type-2 domain in the interval 1 to 101 (MSKKLIALCA…AAGIIKEIEE (101 aa)). The active-site Phosphocysteine intermediate is C11. C11 carries the post-translational modification Phosphocysteine; by EIIA.

The protein localises to the cytoplasm. It catalyses the reaction D-fructose(out) + N(pros)-phospho-L-histidyl-[protein] = D-fructose 1-phosphate(in) + L-histidyl-[protein]. The phosphoenolpyruvate-dependent sugar phosphotransferase system (sugar PTS), a major carbohydrate active transport system, catalyzes the phosphorylation of incoming sugar substrates concomitantly with their translocation across the cell membrane. The enzyme II FryABC PTS system is involved in fructose transport. In Shigella flexneri, this protein is PTS system fructose-like EIIB component 1 (fryB).